Consider the following 534-residue polypeptide: Blue-light-activated protein (534 aa).

Residues 20–93 (GKDIFFAAVE…QSIRDAIAQR (74 aa)) form the PAS domain. Cysteine 70 carries the S-4a-FMN cysteine modification. The region spanning 94-148 (NDISAEIINYRKDGSSFWNALFISPVYNDAGDLIYFFASQLDISRRKDAEEALRQ) is the PAC domain. Positions 161–390 (GIAHDFNNLL…TLRLYFPVDE (230 aa)) constitute a Histidine kinase domain. At histidine 164 the chain carries Phosphohistidine; by autocatalysis. A Response regulatory domain is found at 411–527 (RILIVEDRPD…DLARKVRQVL (117 aa)). The residue at position 461 (aspartate 461) is a 4-aspartylphosphate.

In terms of processing, FMN binds covalently to cysteine after exposure to blue light and this bond is spontaneously broken in the dark.

The enzyme catalyses ATP + protein L-histidine = ADP + protein N-phospho-L-histidine.. Functionally, photosensitive kinase and response regulator that is involved in increased bacterial virulence upon exposure to light. The polypeptide is Blue-light-activated protein (Pseudomonas syringae pv. tomato (strain ATCC BAA-871 / DC3000)).